A 270-amino-acid chain; its full sequence is uncharacterized protein (270 aa).

The signal sequence occupies residues 1-22 (MEYIKKIALYMSVLLLIIFIGG). The N-palmitoyl cysteine moiety is linked to residue Cys-23. Cys-23 carries S-diacylglycerol cysteine lipidation.

Belongs to the staphylococcal tandem lipoprotein family.

It localises to the cell membrane. This is an uncharacterized protein from Staphylococcus aureus (strain MW2).